The following is a 188-amino-acid chain: Large ribosomal subunit protein eL18 (188 aa).

Residue K119 forms a Glycyl lysine isopeptide (Lys-Gly) (interchain with G-Cter in SUMO2) linkage. A Phosphoserine modification is found at S130. The disordered stretch occupies residues H151–N188. At T158 the chain carries Phosphothreonine. 2 stretches are compositionally biased toward basic residues: residues S161–G171 and R178–N188. Residue K164 forms a Glycyl lysine isopeptide (Lys-Gly) (interchain with G-Cter in SUMO2) linkage.

It belongs to the eukaryotic ribosomal protein eL18 family. In terms of assembly, component of the large ribosomal subunit.

It localises to the cytoplasm. Its subcellular location is the cytosol. The protein resides in the rough endoplasmic reticulum. Its function is as follows. Component of the large ribosomal subunit. The ribosome is a large ribonucleoprotein complex responsible for the synthesis of proteins in the cell. The polypeptide is Large ribosomal subunit protein eL18 (RPL18) (Canis lupus familiaris (Dog)).